Here is a 281-residue protein sequence, read N- to C-terminus: Cell division protein DivIB (281 aa).

The disordered stretch occupies residues 1–36 (MARKRITRRDPEEELSKFLRHEPGQGQETRKLSSQL). Residues 1-46 (MARKRITRRDPEEELSKFLRHEPGQGQETRKLSSQLTSLKKERRRG) lie on the Cytoplasmic side of the membrane. Residues 8–31 (RRDPEEELSKFLRHEPGQGQETRK) are compositionally biased toward basic and acidic residues. A helical transmembrane segment spans residues 47–69 (LLTRLGSIMAVCLLAIAFLTYYV). The Extracellular portion of the chain corresponds to 70–281 (SPLADVSTVR…SAEKKAYGLS (212 aa)). The 72-residue stretch at 73–144 (ADVSTVRVLG…NTLNMQVHER (72 aa)) folds into the POTRA domain.

This sequence belongs to the FtsQ/DivIB family. DivIB subfamily.

The protein localises to the cell membrane. Its function is as follows. Cell division protein that may be involved in stabilizing or promoting the assembly of the division complex. This is Cell division protein DivIB from Lactobacillus delbrueckii subsp. bulgaricus (strain ATCC 11842 / DSM 20081 / BCRC 10696 / JCM 1002 / NBRC 13953 / NCIMB 11778 / NCTC 12712 / WDCM 00102 / Lb 14).